Here is a 247-residue protein sequence, read N- to C-terminus: Geranylgeranylglyceryl phosphate synthase (247 aa).

Mg(2+) contacts are provided by aspartate 23 and serine 52. Sn-glycerol 1-phosphate-binding positions include 171 to 177 (YLEAGSG), 203 to 204 (GG), and 225 to 226 (GT).

It belongs to the GGGP/HepGP synthase family. Group II subfamily. It depends on Mg(2+) as a cofactor.

The protein resides in the cytoplasm. The catalysed reaction is sn-glycerol 1-phosphate + (2E,6E,10E)-geranylgeranyl diphosphate = sn-3-O-(geranylgeranyl)glycerol 1-phosphate + diphosphate. The protein operates within membrane lipid metabolism; glycerophospholipid metabolism. In terms of biological role, prenyltransferase that catalyzes the transfer of the geranylgeranyl moiety of geranylgeranyl diphosphate (GGPP) to the C3 hydroxyl of sn-glycerol-1-phosphate (G1P). This reaction is the first ether-bond-formation step in the biosynthesis of archaeal membrane lipids. The protein is Geranylgeranylglyceryl phosphate synthase of Methanosarcina acetivorans (strain ATCC 35395 / DSM 2834 / JCM 12185 / C2A).